We begin with the raw amino-acid sequence, 306 residues long: Transcription initiation factor IIB (306 aa).

2 tandem repeats follow at residues 122–205 (NELE…LREL) and 216–297 (DYVT…ELTQ).

Belongs to the TFIIB family.

In terms of biological role, stabilizes TBP binding to an archaeal box-A promoter. Also responsible for recruiting RNA polymerase II to the pre-initiation complex (DNA-TBP-TFIIB). The protein is Transcription initiation factor IIB of Saccharolobus shibatae (strain ATCC 51178 / DSM 5389 / JCM 8931 / NBRC 15437 / B12) (Sulfolobus shibatae).